A 207-amino-acid polypeptide reads, in one-letter code: Guanylate kinase (207 aa).

Residues 17–197 form the Guanylate kinase-like domain; the sequence is GRLVVLAGPS…SCDELVSLLV (181 aa). Residue 24–31 participates in ATP binding; that stretch reads GPSAVGKS.

Belongs to the guanylate kinase family.

It localises to the cytoplasm. It catalyses the reaction GMP + ATP = GDP + ADP. Its function is as follows. Essential for recycling GMP and indirectly, cGMP. This chain is Guanylate kinase, found in Rhodococcus jostii (strain RHA1).